The sequence spans 206 residues: MSRSLHDQTLALAGLCQAATLVQQIAHNGNCNEDSLETCIRSLFATNPASTLDVYGGELSDIREGLTVLSTVLAQHGQPQDVEILRYMFNLIQLEAKLKRSPDMLDVIGNRIEQARHTASHFGYSHSNLLGNLASIYADTISTFRLRIQVTGNPQILQRNENADKVRALLLAGIRSAVLWRQSGGHRWQLIFTRKKVISHARELLR.

It belongs to the HflD family.

Its subcellular location is the cytoplasm. It localises to the cell inner membrane. The polypeptide is High frequency lysogenization protein HflD homolog (Marinobacter nauticus (strain ATCC 700491 / DSM 11845 / VT8) (Marinobacter aquaeolei)).